We begin with the raw amino-acid sequence, 338 residues long: Anthranilate phosphoribosyltransferase (338 aa).

5-phospho-alpha-D-ribose 1-diphosphate-binding positions include Gly81, Gly84–Asp85, Thr89, Asn91–Thr94, Lys109–Ser117, and Ser121. Gly81 contacts anthranilate. Residue Ser93 coordinates Mg(2+). Asn112 contributes to the anthranilate binding site. Arg167 contacts anthranilate. Mg(2+)-binding residues include Asp225 and Glu226.

It belongs to the anthranilate phosphoribosyltransferase family. As to quaternary structure, homodimer. It depends on Mg(2+) as a cofactor.

The catalysed reaction is N-(5-phospho-beta-D-ribosyl)anthranilate + diphosphate = 5-phospho-alpha-D-ribose 1-diphosphate + anthranilate. It functions in the pathway amino-acid biosynthesis; L-tryptophan biosynthesis; L-tryptophan from chorismate: step 2/5. Its function is as follows. Catalyzes the transfer of the phosphoribosyl group of 5-phosphorylribose-1-pyrophosphate (PRPP) to anthranilate to yield N-(5'-phosphoribosyl)-anthranilate (PRA). This Methanoculleus marisnigri (strain ATCC 35101 / DSM 1498 / JR1) protein is Anthranilate phosphoribosyltransferase.